The chain runs to 178 residues: Oligoribonuclease (178 aa).

Residues 7 to 168 (LIWIDLEMTG…DDIRESIAEL (162 aa)) form the Exonuclease domain. The active site involves Y128.

This sequence belongs to the oligoribonuclease family.

The protein resides in the cytoplasm. 3'-to-5' exoribonuclease specific for small oligoribonucleotides. The sequence is that of Oligoribonuclease from Pseudomonas syringae pv. tomato (strain ATCC BAA-871 / DC3000).